The sequence spans 203 residues: Endo-type membrane-bound lytic murein transglycosylase A (203 aa).

Residues 1–15 (MKLRWFAFLIVLLAG) form the signal peptide. Cys-16 is lipidated: N-palmitoyl cysteine. Cys-16 carries the S-diacylglycerol cysteine lipid modification.

Belongs to the transglycosylase Slt family.

Its subcellular location is the cell outer membrane. It catalyses the reaction Endolytic cleavage of the (1-&gt;4)-beta-glycosidic linkage between N-acetylmuramic acid (MurNAc) and N-acetylglucosamine (GlcNAc) residues in peptidoglycan with concomitant formation of a 1,6-anhydrobond in the MurNAc residue.. In terms of biological role, murein-degrading enzyme. May play a role in recycling of muropeptides during cell elongation and/or cell division. Preferentially cleaves at a distance of more than two disaccharide units from the ends of the glycan chain. The polypeptide is Endo-type membrane-bound lytic murein transglycosylase A (Escherichia coli (strain K12 / MC4100 / BW2952)).